The chain runs to 378 residues: Putative F-box protein At5g51000 (378 aa).

The 47-residue stretch at 1–47 (MSTMSDLFPDLVEEILSRVPITSLKAVKLTCKQWNDLSKDSSFTKNH) folds into the F-box domain.

In Arabidopsis thaliana (Mouse-ear cress), this protein is Putative F-box protein At5g51000.